A 212-amino-acid chain; its full sequence is Redox-sensing transcriptional repressor Rex (212 aa).

A DNA-binding region (H-T-H motif) is located at residues 17 to 56 (LYARSLRYLLEEGIHSVSSQELGERINVTAAQIRKDLSYF). 91-96 (GIGLLG) provides a ligand contact to NAD(+).

It belongs to the transcriptional regulatory Rex family. Homodimer.

It is found in the cytoplasm. Modulates transcription in response to changes in cellular NADH/NAD(+) redox state. The chain is Redox-sensing transcriptional repressor Rex from Chloroflexus aggregans (strain MD-66 / DSM 9485).